We begin with the raw amino-acid sequence, 609 residues long: MKMIQRPLNWLVLAGAATGFPLYAAQMVTIDDASMVEQALAQQQYSMMPAASGFKAVNTVQLPNGKVKVRYQQMYNGVPVYGTVVVATESSKGISQVYGQMAQQLEADLPTVTPDIESQQAIALAVSHFGEQHAGESLPVENESVQLMVRLDDNQQAQLVYLVDFFVASETPSRPFYFISAETGEVLDQWDGINHAQATGTGPGGNQKTGRYEYGSNGLPGFTIDKTGTTCTMNNSAVKTVNLNGGTSGSTAFSYACNNSTNYNSVKTVNGAYSPLNDAHFFGKVVFDMYQQWLNTSPLTFQLTMRVHYGNNYENAFWDGRAMTFGDGYTRFYPLVDINVSAHEVSHGFTEQNSGLVYRDMSGGINEAFSDIAGEAAEYFMRGNVDWIVGADIFKSSGGLRYFDQPSRDGRSIDHASQYYSGIDVHHSSGVFNRAFYLLANKSGWNVRKGFEVFAVANQLYWTPNSTFDQGGCGVVKAAQDLNYNTADVVAAFNTVGVNASCGTTPPPVGKVLEKGKPITGLSGSRGGEDFYTFTVTNSGSVVVSISGGTGDADLYVKAGSKPTTSSWDCRPYRSGNAEQCSISAVVGTTYHVMLRGYSNYSGVTLRLD.

An N-terminal signal peptide occupies residues 1–24; sequence MKMIQRPLNWLVLAGAATGFPLYA. A propeptide spanning residues 25 to 196 is cleaved from the precursor; that stretch reads AQMVTIDDAS…LDQWDGINHA (172 aa). Residue His-343 participates in Zn(2+) binding. Glu-344 is a catalytic residue. Zn(2+)-binding residues include His-347 and Glu-367. Residue His-426 is the Proton donor of the active site.

It belongs to the peptidase M4 family. It depends on Zn(2+) as a cofactor.

Its subcellular location is the secreted. May play a role in the pathogenesis of cholera. Hap nicks and activates the A subunit of cholera enterotoxin and related enterotoxins. This Vibrio cholerae serotype O1 (strain ATCC 39315 / El Tor Inaba N16961) protein is Hemagglutinin/proteinase (hap).